The sequence spans 156 residues: Cyanate hydratase (156 aa).

Active-site residues include Arg-96, Glu-99, and Ser-122.

Belongs to the cyanase family.

The catalysed reaction is cyanate + hydrogencarbonate + 3 H(+) = NH4(+) + 2 CO2. Functionally, catalyzes the reaction of cyanate with bicarbonate to produce ammonia and carbon dioxide. This is Cyanate hydratase from Escherichia coli O9:H4 (strain HS).